A 459-amino-acid polypeptide reads, in one-letter code: Cysteine--tRNA ligase (459 aa).

Zn(2+) is bound at residue C29. The 'HIGH' region signature appears at 31-41 (MTVYDLCHLGH). Residues C213, H238, and E242 each contribute to the Zn(2+) site. The 'KMSKS' region motif lies at 270–274 (KMSKS). An ATP-binding site is contributed by K273.

The protein belongs to the class-I aminoacyl-tRNA synthetase family. In terms of assembly, monomer. It depends on Zn(2+) as a cofactor.

The protein resides in the cytoplasm. The catalysed reaction is tRNA(Cys) + L-cysteine + ATP = L-cysteinyl-tRNA(Cys) + AMP + diphosphate. In Variovorax paradoxus (strain S110), this protein is Cysteine--tRNA ligase.